We begin with the raw amino-acid sequence, 249 residues long: Tetrahydromethanopterin S-methyltransferase subunit D (249 aa).

The next 6 helical transmembrane spans lie at 9-29 (ILWLVFIIIGGVLISWSVHFV), 47-67 (GTVQLAAGAGLTGLVSAGFMM), 75-95 (LILASGAVGAMIMISVTMIVG), 138-158 (VSFVSGVIGGLLGGIGGALVY), 183-203 (LVGIAAMFAIGIFFVNAVIPS), and 224-244 (AVISSFVATILCAIVAVIAIS).

This sequence belongs to the MtrD family. As to quaternary structure, the complex is composed of 8 subunits; MtrA, MtrB, MtrC, MtrD, MtrE, MtrF, MtrG and MtrH.

It localises to the cell membrane. It carries out the reaction 5-methyl-5,6,7,8-tetrahydromethanopterin + coenzyme M + 2 Na(+)(in) = 5,6,7,8-tetrahydromethanopterin + methyl-coenzyme M + 2 Na(+)(out). The protein operates within one-carbon metabolism; methanogenesis from CO(2); methyl-coenzyme M from 5,10-methylene-5,6,7,8-tetrahydromethanopterin: step 2/2. In terms of biological role, part of a complex that catalyzes the formation of methyl-coenzyme M and tetrahydromethanopterin from coenzyme M and methyl-tetrahydromethanopterin. This is an energy-conserving, sodium-ion translocating step. The chain is Tetrahydromethanopterin S-methyltransferase subunit D from Methanosarcina acetivorans (strain ATCC 35395 / DSM 2834 / JCM 12185 / C2A).